Consider the following 511-residue polypeptide: uncharacterized protein (511 aa).

14 helical membrane passes run 7 to 27, 46 to 66, 80 to 100, 107 to 127, 134 to 154, 163 to 183, 200 to 220, 226 to 246, 266 to 286, 301 to 321, 329 to 349, 357 to 377, 394 to 414, and 437 to 457; these read WVIS…NTAL, VNPI…GPLL, LPVF…ALMA, GAAT…SFPI, LLVL…LGTI, WLFF…YFFL, AGIL…IFLQ, SGYV…LLIV, VLGL…LSAF, LILL…LSAL, GMLG…WLHI, MFAA…AAGL, TAVQ…IGFF, and LFFI…CMNA. The disordered stretch occupies residues 465-486; the sequence is AHKPHDKAKTAPEKPAVSAQGL.

Belongs to the major facilitator superfamily.

Its subcellular location is the cell membrane. This is an uncharacterized protein from Bacillus subtilis (strain 168).